Reading from the N-terminus, the 312-residue chain is Structure-specific endonuclease subunit SLX1 (312 aa).

The GIY-YIG domain maps to 9–92; that stretch reads DFYGCYLLQS…QHGYQTRYIK (84 aa). Residues 219–282 form an SLX1-type zinc finger; that stretch reads CQFCNKIIKH…IPQSPKCPKC (64 aa).

This sequence belongs to the SLX1 family. Forms a heterodimer with SLX4. The cofactor is a divalent metal cation.

The protein resides in the nucleus. Functionally, catalytic subunit of the SLX1-SLX4 structure-specific endonuclease that resolves DNA secondary structures generated during DNA repair and recombination. Has endonuclease activity towards branched DNA substrates, introducing single-strand cuts in duplex DNA close to junctions with ss-DNA. The protein is Structure-specific endonuclease subunit SLX1 of Candida glabrata (strain ATCC 2001 / BCRC 20586 / JCM 3761 / NBRC 0622 / NRRL Y-65 / CBS 138) (Yeast).